We begin with the raw amino-acid sequence, 1287 residues long: Rho GTPase-activating protein 33 (1287 aa).

Residues 1–40 (MVARSTDSLDGPGEGSVQPLPTAGGPSVKGKPGKRLSAPR) form a disordered region. Residue Ser-8 is modified to Phosphoserine. The PX; atypical domain maps to 59–168 (FGHIQLLLSP…CGPVLTWMEL (110 aa)). The SH3 domain maps to 186–248 (PAVAAAHVIK…PSECVELFTE (63 aa)). A Rho-GAP domain is found at 315–510 (CDLGEHLSNS…FLLTHVDVLF (196 aa)). Disordered stretches follow at residues 551–792 (RTQG…SPAA), 813–832 (AGGA…GRSL), 859–1030 (KLRG…VPTP), 1056–1075 (GPPS…SLGP), 1090–1134 (GASE…SPDF), and 1146–1287 (PPDH…RSYC). Residues 558 to 571 (TPTEPTTPKAPASP) are compositionally biased toward low complexity. Ser-570 carries the phosphoserine modification. Residues 572–584 (AERRKGERGEKQR) are compositionally biased toward basic and acidic residues. Positions 622–645 (SGSRPDTVTLRSAKSEESLSSQAS) are enriched in polar residues. Ser-636 carries the phosphoserine modification. Low complexity predominate over residues 672 to 709 (AGSCESLSSSSSSESSSSESSSSSSESSAAGLGALSGS). Ser-727 is modified (phosphoserine). A compositionally biased stretch (pro residues) spans 752 to 766 (PGDPAPPASPAPPAP). Composition is skewed to low complexity over residues 813–829 (AGGA…LSPG) and 896–919 (PARL…SQQE). Polar residues-rich tracts occupy residues 972–981 (RQQSDGSLLR) and 1019–1028 (SPCSVPSQVP). Tyr-1169 carries the post-translational modification Phosphotyrosine. The span at 1175 to 1189 (GPRGPSPASSSSSSP) shows a compositional bias: low complexity. Arg-1244 bears the Omega-N-methylarginine mark. Polar residues predominate over residues 1274-1287 (SWSLHSEGQTRSYC).

It belongs to the PX domain-containing GAP family. In terms of assembly, specifically interacts with CDC42 and RHOQ/TC10 through its Rho-GAP domain. Interacts with NEK6.

May be involved in several stages of intracellular trafficking. Could play an important role in the regulation of glucose transport by insulin. May act as a downstream effector of RHOQ/TC10 in the regulation of insulin-stimulated glucose transport. In Homo sapiens (Human), this protein is Rho GTPase-activating protein 33 (ARHGAP33).